The following is a 337-amino-acid chain: Phosphatidate cytidylyltransferase, mitochondrial (337 aa).

This sequence belongs to the TAM41 family. The cofactor is Mg(2+).

The protein resides in the mitochondrion inner membrane. The enzyme catalyses a 1,2-diacyl-sn-glycero-3-phosphate + CTP + H(+) = a CDP-1,2-diacyl-sn-glycerol + diphosphate. The protein operates within phospholipid metabolism; CDP-diacylglycerol biosynthesis; CDP-diacylglycerol from sn-glycerol 3-phosphate: step 3/3. In terms of biological role, catalyzes the conversion of phosphatidic acid (PA) to CDP-diacylglycerol (CDP-DAG), an essential intermediate in the synthesis of phosphatidylglycerol, cardiolipin and phosphatidylinositol. The protein is Phosphatidate cytidylyltransferase, mitochondrial (Tamm41) of Mus musculus (Mouse).